A 391-amino-acid polypeptide reads, in one-letter code: Cytochrome P450 165A3 (391 aa).

Residues 1–22 (MFEEKNALRGTEIHRRERFDPG) form a disordered region. A heme-binding site is contributed by cysteine 342.

It belongs to the cytochrome P450 family. Heme is required as a cofactor.

It functions in the pathway antibiotic biosynthesis; vancomycin biosynthesis. Involved in the coupling of aromatic side chains of the heptapeptide of vancomycin. The chain is Cytochrome P450 165A3 (cyp165A3) from Amycolatopsis orientalis (Nocardia orientalis).